The chain runs to 353 residues: Holliday junction branch migration complex subunit RuvB (353 aa).

The tract at residues 4-190 is large ATPase domain (RuvB-L); sequence TDKLQAPRVI…FGIVARLEFY (187 aa). ATP-binding positions include Leu-29, Arg-30, Gly-71, Lys-74, Thr-75, Thr-76, 137–139, Arg-180, Tyr-190, and Arg-227; that span reads EDF. Thr-75 is a Mg(2+) binding site. Positions 191 to 261 are small ATPAse domain (RuvB-S); the sequence is TPHELAYIVG…VADAALLMLD (71 aa). The tract at residues 264–353 is head domain (RuvB-H); it reads HLGLDLMDRK…DESAELFSAP (90 aa). Residues Arg-319 and Arg-324 each coordinate DNA.

It belongs to the RuvB family. In terms of assembly, homohexamer. Forms an RuvA(8)-RuvB(12)-Holliday junction (HJ) complex. HJ DNA is sandwiched between 2 RuvA tetramers; dsDNA enters through RuvA and exits via RuvB. An RuvB hexamer assembles on each DNA strand where it exits the tetramer. Each RuvB hexamer is contacted by two RuvA subunits (via domain III) on 2 adjacent RuvB subunits; this complex drives branch migration. In the full resolvosome a probable DNA-RuvA(4)-RuvB(12)-RuvC(2) complex forms which resolves the HJ.

The protein resides in the cytoplasm. The catalysed reaction is ATP + H2O = ADP + phosphate + H(+). In terms of biological role, the RuvA-RuvB-RuvC complex processes Holliday junction (HJ) DNA during genetic recombination and DNA repair, while the RuvA-RuvB complex plays an important role in the rescue of blocked DNA replication forks via replication fork reversal (RFR). RuvA specifically binds to HJ cruciform DNA, conferring on it an open structure. The RuvB hexamer acts as an ATP-dependent pump, pulling dsDNA into and through the RuvAB complex. RuvB forms 2 homohexamers on either side of HJ DNA bound by 1 or 2 RuvA tetramers; 4 subunits per hexamer contact DNA at a time. Coordinated motions by a converter formed by DNA-disengaged RuvB subunits stimulates ATP hydrolysis and nucleotide exchange. Immobilization of the converter enables RuvB to convert the ATP-contained energy into a lever motion, pulling 2 nucleotides of DNA out of the RuvA tetramer per ATP hydrolyzed, thus driving DNA branch migration. The RuvB motors rotate together with the DNA substrate, which together with the progressing nucleotide cycle form the mechanistic basis for DNA recombination by continuous HJ branch migration. Branch migration allows RuvC to scan DNA until it finds its consensus sequence, where it cleaves and resolves cruciform DNA. The chain is Holliday junction branch migration complex subunit RuvB from Aromatoleum aromaticum (strain DSM 19018 / LMG 30748 / EbN1) (Azoarcus sp. (strain EbN1)).